The chain runs to 326 residues: Dolichyl-phosphate beta-glucosyltransferase (326 aa).

At 1–7 the chain is on the lumenal side; the sequence is MWTCLCQ. A helical transmembrane segment spans residues 8–28; sequence LCFYLLSTLAVAALSIAALVL. The Cytoplasmic portion of the chain corresponds to 29–326; sequence YKTKPYPNIK…RIASIQKKEK (298 aa).

Belongs to the glycosyltransferase 2 family.

The protein resides in the endoplasmic reticulum membrane. The catalysed reaction is a di-trans,poly-cis-dolichyl phosphate + UDP-alpha-D-glucose = a di-trans,poly-cis-dolichyl beta-D-glucosyl phosphate + UDP. It participates in protein modification; protein glycosylation. Its function is as follows. Required for normal production of N-glycosylated proteins in the endoplasmic reticulum (ER). Required for embryonic segmentation, dorsal-ventral patterning and gastrulation. Required for chitin orientation and shaping of the apical and lateral plasma membranes of epidermal cells during cuticle differentiation. Also required for correctly shaping apical membrane topology of the epithelia of other organs such as the midgut and the hindgut. The protein is Dolichyl-phosphate beta-glucosyltransferase (wol) of Drosophila melanogaster (Fruit fly).